A 190-amino-acid chain; its full sequence is Dense granule protein 1 (190 aa).

The N-terminal stretch at 1 to 24 (MVRVSAIVGAAASVFVCLSAGAYA) is a signal peptide. Residue N30 is glycosylated (N-linked (GlcNAc...) asparagine).

The protein resides in the secreted. This Toxoplasma gondii protein is Dense granule protein 1 (GRA1).